Consider the following 388-residue polypeptide: Glycoprotein-N-acetylgalactosamine 3-beta-galactosyltransferase 1 (388 aa).

Residues 1-12 (MAPISHYIGKTS) lie on the Cytoplasmic side of the membrane. Residues 13–30 (LTTLAIGIAIGITVSNIV) traverse the membrane as a helical; Signal-anchor for type II membrane protein segment. Over 31 to 388 (KFSSTQRRHF…LAQTDSKHIS (358 aa)) the chain is Lumenal. The tract at residues 43 to 65 (SGYIPDSPHSHGENDFVEGPDDS) is disordered. N-linked (GlcNAc...) asparagine glycosylation is present at N80. Residues C95 and C119 are joined by a disulfide bond. 7 residues coordinate UDP: M98, N100, E142, G143, R144, K150, and D173. Positions 173 and 175 each coordinate Mn(2+). C238 and C253 are joined by a disulfide. W292 contributes to the a glycoprotein binding site. C307 and C308 are disulfide-bonded. 2 residues coordinate UDP: H316 and Y317. H316 serves as a coordination point for Mn(2+). The disordered stretch occupies residues 344 to 388 (STEEQDHGSSHKDTDAMKPEGKGMEDKEDEETNISLAQTDSKHIS). Over residues 347–368 (EQDHGSSHKDTDAMKPEGKGME) the composition is skewed to basic and acidic residues. Residue N376 is glycosylated (N-linked (GlcNAc...) asparagine).

The protein belongs to the glycosyltransferase 31 family. Beta3-Gal-T subfamily. In terms of assembly, homodimer; disulfide-linked. It depends on Mn(2+) as a cofactor.

Its subcellular location is the membrane. It catalyses the reaction an N-acetyl-alpha-D-galactosaminyl derivative + UDP-alpha-D-galactose = a beta-D-galactosyl-(1-&gt;3)-N-acetyl-alpha-D-galactosaminyl derivative + UDP + H(+). It participates in protein modification; protein glycosylation. Its function is as follows. Glycosyltransferase that generates the core 1 O-glycan Gal-beta1-3GalNAc-alpha1-Ser/Thr (T antigen), which is a precursor for many extended O-glycans in glycoproteins. The sequence is that of Glycoprotein-N-acetylgalactosamine 3-beta-galactosyltransferase 1 from Biomphalaria glabrata (Bloodfluke planorb).